The chain runs to 358 residues: CCAAT/enhancer-binding protein alpha (358 aa).

The segment at 1-55 is disordered; sequence MESADFYEAEPRPPMSSHLQSPPHAPSNAAFGFPRGAGPAPPPAPPAAPEPLGGI. A required to repress E2F1:TFDP1-mediated transcription, to inhibit cell cycle and to induce adipocyte differentiation region spans residues 1-70; it reads MESADFYEAE…SIDISAYIDP (70 aa). Over residues 29-38 the composition is skewed to low complexity; that stretch reads AAFGFPRGAG. Pro residues predominate over residues 39–49; the sequence is PAPPPAPPAAP. The tract at residues 54–72 is required for interaction with TRIB1; sequence GICEHETSIDISAYIDPAA. A required to induce adipocyte differentiation region spans residues 126-200; that stretch reads PPGYGCAAAG…HASPAHLAAP (75 aa). Position 159 is an N6-acetyllysine; alternate (lysine 159). Lysine 159 participates in a covalent cross-link: Glycyl lysine isopeptide (Lys-Gly) (interchain with G-Cter in SUMO); alternate. Residue lysine 159 forms a Glycyl lysine isopeptide (Lys-Gly) (interchain with G-Cter in SUMO2); alternate linkage. Disordered regions lie at residues 176–195 and 213–310; these read LFPY…ASPA and TMHL…NVET. A compositionally biased stretch (pro residues) spans 179–191; it reads YQPPPPPPPPHPH. The required to functionally cooperate with SREBF1 in promoter activation stretch occupies residues 180 to 194; sequence QPPPPPPPPHPHASP. Position 193 is a phosphoserine (serine 193). Residues 220–234 show a composition bias toward pro residues; it reads HPTPPPTPVPSPHPA. 2 positions are modified to phosphothreonine; by GSK3: threonine 222 and threonine 226. A Phosphoserine; by GSK3 modification is found at serine 230. The segment at 240–358 is interaction with FOXO1; it reads AGLPGPGGSL…SLVKAMGNCA (119 aa). Over residues 261-271 the composition is skewed to gly residues; sequence TGGGGGGGAGA. Over residues 276–292 the composition is skewed to basic and acidic residues; sequence KSVDKNSNEYRVRRERN. The 64-residue stretch at 282–345 folds into the bZIP domain; that stretch reads SNEYRVRRER…DTLRGIFRQL (64 aa). Residues 285–300 mediate DNA binding; that stretch reads YRVRRERNNIAVRKSR. The interval 286–313 is basic motif; sequence RVRRERNNIAVRKSRDKAKQRNVETQQK. The segment at 317 to 345 is leucine-zipper; sequence LTSDNDRLRKRVEQLSRELDTLRGIFRQL.

It belongs to the bZIP family. C/EBP subfamily. Binds DNA as a homodimer and as a heterodimer. Can form stable heterodimers with CEBPB, CEBPD, CEBPE and CEBPG. Can form stable homodimers (also isoform 2 and isoform 3 dimers) and heterodimers with CEBPB (with isoform 2 and isoform 3) and CEBPG. Interacts with PRDM16. Interacts with UBN1. Interacts with ZNF638; this interaction increases transcriptional activation. Interacts with the complex TFDP2:E2F1; the interaction prevents CEBPA binding to target gene promoters and represses its transcriptional activity. Interacts with RB1. Interacts (when phosphorylated at Ser-193) with CDK2, CDK4, E2F4 and SMARCA2. Interacts with SREBPF1. Interacts with FOXO1 (via the Fork-head domain); the interaction increases when FOXO1 is deacetylated. Interacts with SIX1. Interacts (via recognition sequence) with TRIB1. As to quaternary structure, interacts with TAF1A and UBTF. In terms of assembly, interacts with NPM1. Post-translationally, sumoylated, sumoylation blocks the inhibitory effect on cell proliferation by disrupting the interaction with SMARCA2. Phosphorylation at Ser-193 is required for interaction with CDK2, CDK4 and SWI/SNF complex leading to cell cycle inhibition. Dephosphorylated at Ser-193 by protein phosphatase 2A (PP2A) through PI3K/AKT signaling pathway regulation. Phosphorylation at Thr-222 and Thr-226 by GSK3 is constitutive in adipose tissue and lung. In liver, both Thr-222 and Thr-226 are phosphorylated only during feeding but not during fasting. Phosphorylation of the GSK3 consensus sites selectively decreases transactivation activity on IRE-controlled promoters. In terms of processing, ubiquitinated by COP1 upon interaction with TRIB1. Isoform 2 and isoform 3 are expressed in liver (at protein level).

Its subcellular location is the nucleus. It localises to the nucleolus. Its function is as follows. Transcription factor that coordinates proliferation arrest and the differentiation of myeloid progenitors, adipocytes, hepatocytes, and cells of the lung and the placenta. Binds directly to the consensus DNA sequence 5'-T[TG]NNGNAA[TG]-3' acting as an activator on distinct target genes. During early embryogenesis, plays essential and redundant functions with CEBPB. Essential for the transition from common myeloid progenitors (CMP) to granulocyte/monocyte progenitors (GMP). Critical for the proper development of the liver and the lung. Necessary for terminal adipocyte differentiation, is required for postnatal maintenance of systemic energy homeostasis and lipid storage. To regulate these different processes at the proper moment and tissue, interplays with other transcription factors and modulators. Down-regulates the expression of genes that maintain cells in an undifferentiated and proliferative state through E2F1 repression, which is critical for its ability to induce adipocyte and granulocyte terminal differentiation. Reciprocally E2F1 blocks adipocyte differentiation by binding to specific promoters and repressing CEBPA binding to its target gene promoters. Proliferation arrest also depends on a functional binding to SWI/SNF complex. In liver, regulates gluconeogenesis and lipogenesis through different mechanisms. To regulate gluconeogenesis, functionally cooperates with FOXO1 binding to IRE-controlled promoters and regulating the expression of target genes such as PCK1 or G6PC1. To modulate lipogenesis, interacts and transcriptionally synergizes with SREBF1 in promoter activation of specific lipogenic target genes such as ACAS2. In adipose tissue, seems to act as FOXO1 coactivator accessing to ADIPOQ promoter through FOXO1 binding sites. Functionally, can act as dominant-negative. Binds DNA and have transctivation activity, even if much less efficiently than isoform 2. Does not inhibit cell proliferation. Directly and specifically enhances ribosomal DNA transcription interacting with RNA polymerase I-specific cofactors and inducing histone acetylation. The chain is CCAAT/enhancer-binding protein alpha from Rattus norvegicus (Rat).